Here is a 518-residue protein sequence, read N- to C-terminus: Protein FAM98A (518 aa).

2 disordered regions span residues 300-415 and 434-518; these read GRVP…GHSS and GSGY…HYTS. The span at 302-311 shows a compositional bias: basic and acidic residues; it reads VPDRGGRPNE. 3 stretches are compositionally biased toward gly residues: residues 349–364, 383–396, and 405–415; these read GGRG…GGRG, WTDG…GYQD, and QPGGYHGGHSS. The span at 447–459 shows a compositional bias: basic and acidic residues; that stretch reads RYQDGGHHGDRGG. The span at 460–484 shows a compositional bias: gly residues; it reads GRGGRGGRGGRGGRAGQGGGWGGRG. Low complexity predominate over residues 488-504; it reads YHQGGQFEQHFQHGGYQ. Residues 505–518 show a composition bias toward polar residues; it reads YNHSGFGQGRHYTS.

Belongs to the FAM98 family. In terms of assembly, interacts (via N- and C-terminus) with DDX1. Interacts (via N- and C-terminus) with C14orf166. Interacts with FAM98B. Interacts with PLEKHM1 (via N- and C-terminus).

Its function is as follows. Positively stimulates PRMT1-induced protein arginine methylation. Involved in skeletal homeostasis. Positively regulates lysosome peripheral distribution and ruffled border formation in osteoclasts. This chain is Protein FAM98A, found in Pongo abelii (Sumatran orangutan).